The primary structure comprises 128 residues: 3-aminoacrylate deaminase RutC (128 aa).

It belongs to the RutC family. Homotrimer.

The catalysed reaction is (Z)-3-aminoacrylate + H2O + H(+) = 3-oxopropanoate + NH4(+). Its function is as follows. Involved in pyrimidine catabolism. Catalyzes the deamination of 3-aminoacrylate to malonic semialdehyde, a reaction that can also occur spontaneously. RutC may facilitate the reaction and modulate the metabolic fitness, rather than catalyzing essential functions. This chain is 3-aminoacrylate deaminase RutC, found in Escherichia coli O157:H7.